The sequence spans 165 residues: Growth arrest and DNA damage-inducible protein GADD45 alpha (165 aa).

The residue at position 2 (Thr2) is a Phosphothreonine.

The protein belongs to the GADD45 family. Interacts with MAPK14. Predominantly monomeric but also forms dimers and other oligomers as concentration increases. Interacts with GADD45GIP1. Interacts weakly with PCNA. Interacts with AURKA, likely to compete with dimerization.

It localises to the nucleus. In T-cells, functions as a regulator of p38 MAPKs by inhibiting p88 phosphorylation and activity. Might affect PCNA interaction with some CDK (cell division protein kinase) complexes; stimulates DNA excision repair in vitro and inhibits entry of cells into S phase. The polypeptide is Growth arrest and DNA damage-inducible protein GADD45 alpha (GADD45A) (Homo sapiens (Human)).